The chain runs to 285 residues: Heterogeneous nuclear ribonucleoprotein A/B (285 aa).

Positions 1 to 65 (MSDAAEEQPM…NQNGAEGDQI (65 aa)) are disordered. Residues 25–43 (EGEAPVEPSAAAAAPAASA) are compositionally biased toward low complexity. 2 consecutive RRM domains span residues 75-158 (GKMF…KDPV) and 159-238 (KKIF…QPKE). Ser87 is subject to Phosphoserine. Glycyl lysine isopeptide (Lys-Gly) (interchain with G-Cter in SUMO2) cross-links involve residues Lys136 and Lys208. At Lys220 the chain carries N6-acetyllysine. The disordered stretch occupies residues 239–285 (VYQQQQYGSGGRGNRNRGNRGSGGGQGSTNYGKSQRRGGHQNNYKPY). Phosphoserine is present on Ser247. Arg250 bears the Dimethylated arginine; alternate mark. At Arg250 the chain carries Omega-N-methylarginine; alternate. Omega-N-methylarginine occurs at positions 255 and 258. Lys271 carries the post-translational modification N6-acetyllysine. Arg275 is modified (dimethylated arginine; alternate). Position 275 is an omega-N-methylarginine; alternate (Arg275). The residue at position 275 (Arg275) is an Asymmetric dimethylarginine; alternate.

In terms of assembly, identified in a IGF2BP1-dependent mRNP granule complex containing untranslated mRNAs. Interacts with APOBEC1. As to expression, ubiquitous.

The protein localises to the nucleus. It is found in the cytoplasm. Functionally, transcriptional repressor. Binds to CArG box motifs, single-stranded and double-stranded DNA, and RNA. It may be that repression by CBF-A is a result of competitive binding of CBF, a putative positive factor, and CBF-A to the same or overlapping motifs around the CArG boxes. This chain is Heterogeneous nuclear ribonucleoprotein A/B (Hnrnpab), found in Mus musculus (Mouse).